An 865-amino-acid chain; its full sequence is Probable beta-glucosidase J (865 aa).

Residue aspartate 233 is part of the active site. Asparagine 330, asparagine 447, asparagine 503, and asparagine 764 each carry an N-linked (GlcNAc...) asparagine glycan. One can recognise a PA14 domain in the interval 411–579 (TGQPGYTFRV…DTDTAIQQAV (169 aa)).

This sequence belongs to the glycosyl hydrolase 3 family.

It is found in the secreted. The catalysed reaction is Hydrolysis of terminal, non-reducing beta-D-glucosyl residues with release of beta-D-glucose.. It functions in the pathway glycan metabolism; cellulose degradation. Its function is as follows. Beta-glucosidases are one of a number of cellulolytic enzymes involved in the degradation of cellulosic biomass. Catalyzes the last step releasing glucose from the inhibitory cellobiose. This Aspergillus fumigatus (strain ATCC MYA-4609 / CBS 101355 / FGSC A1100 / Af293) (Neosartorya fumigata) protein is Probable beta-glucosidase J (bglJ).